A 357-amino-acid polypeptide reads, in one-letter code: MSSIEELARANVRALTPYQSARRLGGNGDVWLNANEYPQAPEFQLTLQTLNRYPECQPVMVINRYAEYAGVTPEQVLVSRGADEGIELLIRAFCEPGKDAILFCPPTYGMYAVSAETFGVERRTAASKSDWQLDLDAIESQLDGTKVVYVCSPNNPTGNLIARDDLRQLLTLAQGKALVVIDEAYIEFCPQASTASWLAEFPHLVILRTLSKAFSLAGLRCGFTLANPEVIQLLLKVIAPYPLSTPVADIAAQALSHEGIAKMKANVAEVTTNRRWLSDILKNIPCIEEVFHSESNYLLVRFTASPSVFKTLWDQGIILRDQNKQPSLAGCLRITIGNRYECERVVAALQSLPGINA.

Lys212 is subject to N6-(pyridoxal phosphate)lysine.

It belongs to the class-II pyridoxal-phosphate-dependent aminotransferase family. Histidinol-phosphate aminotransferase subfamily. As to quaternary structure, homodimer. Pyridoxal 5'-phosphate serves as cofactor.

The catalysed reaction is L-histidinol phosphate + 2-oxoglutarate = 3-(imidazol-4-yl)-2-oxopropyl phosphate + L-glutamate. It participates in amino-acid biosynthesis; L-histidine biosynthesis; L-histidine from 5-phospho-alpha-D-ribose 1-diphosphate: step 7/9. The sequence is that of Histidinol-phosphate aminotransferase from Pectobacterium atrosepticum (strain SCRI 1043 / ATCC BAA-672) (Erwinia carotovora subsp. atroseptica).